The following is a 425-amino-acid chain: Glutamate-1-semialdehyde 2,1-aminomutase (425 aa).

Lysine 264 is subject to N6-(pyridoxal phosphate)lysine.

The protein belongs to the class-III pyridoxal-phosphate-dependent aminotransferase family. HemL subfamily. In terms of assembly, homodimer. Pyridoxal 5'-phosphate serves as cofactor.

The protein resides in the cytoplasm. The catalysed reaction is (S)-4-amino-5-oxopentanoate = 5-aminolevulinate. It functions in the pathway porphyrin-containing compound metabolism; protoporphyrin-IX biosynthesis; 5-aminolevulinate from L-glutamyl-tRNA(Glu): step 2/2. This is Glutamate-1-semialdehyde 2,1-aminomutase from Campylobacter lari (strain RM2100 / D67 / ATCC BAA-1060).